We begin with the raw amino-acid sequence, 643 residues long: Threonine--tRNA ligase (643 aa).

Residues 1-61 (MIKITLKDGS…NEDSSLEICT (61 aa)) enclose the TGS domain. Residues 240–540 (DHNKLGRELG…LIEKYAGALP (301 aa)) form a catalytic region. Zn(2+)-binding residues include Cys-335, His-386, and His-517.

This sequence belongs to the class-II aminoacyl-tRNA synthetase family. As to quaternary structure, homodimer. Zn(2+) serves as cofactor.

The protein localises to the cytoplasm. The catalysed reaction is tRNA(Thr) + L-threonine + ATP = L-threonyl-tRNA(Thr) + AMP + diphosphate + H(+). Functionally, catalyzes the attachment of threonine to tRNA(Thr) in a two-step reaction: L-threonine is first activated by ATP to form Thr-AMP and then transferred to the acceptor end of tRNA(Thr). Also edits incorrectly charged L-seryl-tRNA(Thr). This is Threonine--tRNA ligase from Clostridium perfringens (strain ATCC 13124 / DSM 756 / JCM 1290 / NCIMB 6125 / NCTC 8237 / Type A).